Consider the following 807-residue polypeptide: Protein WEAK CHLOROPLAST MOVEMENT UNDER BLUE LIGHT 1 (807 aa).

The interval 1-162 (MEDLKTVEAS…GTPKNVDSHR (162 aa)) is disordered. Residues 31–40 (RESNIQSATK) show a composition bias toward polar residues. Low complexity predominate over residues 46-73 (QSQTDTEETQQSQTDTEETQQSQTDDTT). A compositionally biased stretch (polar residues) spans 138–157 (RTVSSPRFSGSPVSTGTPKN). S148 bears the Phosphoserine mark. 4 coiled-coil regions span residues 191–429 (RMQA…ELVA), 457–489 (DLHA…LKLA), 516–621 (IAVA…ALEE), and 664–724 (AAVS…WRAE). 2 disordered regions span residues 532-565 (IASV…EAKS) and 722-789 (RAEH…KKKK). Basic and acidic residues-rich tracts occupy residues 537–548 (SKEKDAREKMVE), 722–732 (RAEHEQKRKAG), and 739–749 (KNLKESFEGGK). Positions 761-781 (SSPSESYGTEENSETNLSPQT) are enriched in polar residues.

The protein belongs to the WEB family. Interacts with PMI2. In terms of tissue distribution, ubiquitous but preferentially in chloroplast-containing tissues.

It localises to the cytoplasm. Required for the chloroplast avoidance response under high intensity blue light. This avoidance response consists in the relocation of chloroplasts on the anticlinal side of exposed cells. Acts in association with PMI2 to maintain the velocity of chloroplast photorelocation movement via cp-actin filaments regulation. The protein is Protein WEAK CHLOROPLAST MOVEMENT UNDER BLUE LIGHT 1 (WEB1) of Arabidopsis thaliana (Mouse-ear cress).